Here is a 243-residue protein sequence, read N- to C-terminus: Peptide deformylase, mitochondrial (243 aa).

A mitochondrion-targeting transit peptide spans 1–39 (MARLWGALSLWPLWAAVPWGGAAAVGVRACSSTAAPDGV). Substrate is bound by residues Gly71, Pro169, and Gly171. Residues 165-175 (LVTFPEGCESV) are hydrophobic dimerization interface. 2 residues coordinate Co(2+): Cys172 and His214. Glu215 is a catalytic residue. His218 is a binding site for Co(2+).

The protein belongs to the polypeptide deformylase family. In terms of assembly, homodimer. It depends on Co(2+) as a cofactor. In terms of tissue distribution, ubiquitous.

The protein resides in the mitochondrion. It carries out the reaction N-terminal N-formyl-L-methionyl-[peptide] + H2O = N-terminal L-methionyl-[peptide] + formate. Functionally, removes the formyl group from the N-terminal Met of newly synthesized proteins. The chain is Peptide deformylase, mitochondrial from Homo sapiens (Human).